Consider the following 98-residue polypeptide: NADH-ubiquinone oxidoreductase chain 4L (98 aa).

3 consecutive transmembrane segments (helical) span residues 2–22, 29–49, and 61–81; these read PSIS…MLIF, SLLC…LTIL, and ILLL…LVTV.

It belongs to the complex I subunit 4L family. In terms of assembly, core subunit of respiratory chain NADH dehydrogenase (Complex I) which is composed of 45 different subunits.

It is found in the mitochondrion inner membrane. It carries out the reaction a ubiquinone + NADH + 5 H(+)(in) = a ubiquinol + NAD(+) + 4 H(+)(out). Functionally, core subunit of the mitochondrial membrane respiratory chain NADH dehydrogenase (Complex I) which catalyzes electron transfer from NADH through the respiratory chain, using ubiquinone as an electron acceptor. Part of the enzyme membrane arm which is embedded in the lipid bilayer and involved in proton translocation. The sequence is that of NADH-ubiquinone oxidoreductase chain 4L (MT-ND4L) from Lemur catta (Ring-tailed lemur).